Consider the following 232-residue polypeptide: 5'-methylthioadenosine/S-adenosylhomocysteine nucleosidase (232 aa).

Catalysis depends on Glu12, which acts as the Proton acceptor. Residues Gly78, Ile152, and 173–174 (ME) each bind substrate. Catalysis depends on Asp197, which acts as the Proton donor.

It belongs to the PNP/UDP phosphorylase family. MtnN subfamily. As to quaternary structure, homodimer.

It carries out the reaction S-adenosyl-L-homocysteine + H2O = S-(5-deoxy-D-ribos-5-yl)-L-homocysteine + adenine. The enzyme catalyses S-methyl-5'-thioadenosine + H2O = 5-(methylsulfanyl)-D-ribose + adenine. It catalyses the reaction 5'-deoxyadenosine + H2O = 5-deoxy-D-ribose + adenine. Its pathway is amino-acid biosynthesis; L-methionine biosynthesis via salvage pathway; S-methyl-5-thio-alpha-D-ribose 1-phosphate from S-methyl-5'-thioadenosine (hydrolase route): step 1/2. Its function is as follows. Catalyzes the irreversible cleavage of the glycosidic bond in both 5'-methylthioadenosine (MTA) and S-adenosylhomocysteine (SAH/AdoHcy) to adenine and the corresponding thioribose, 5'-methylthioribose and S-ribosylhomocysteine, respectively. Also cleaves 5'-deoxyadenosine, a toxic by-product of radical S-adenosylmethionine (SAM) enzymes, into 5-deoxyribose and adenine. Thus, is required for in vivo function of the radical SAM enzymes biotin synthase and lipoic acid synthase, that are inhibited by 5'-deoxyadenosine accumulation. The chain is 5'-methylthioadenosine/S-adenosylhomocysteine nucleosidase from Escherichia fergusonii (strain ATCC 35469 / DSM 13698 / CCUG 18766 / IAM 14443 / JCM 21226 / LMG 7866 / NBRC 102419 / NCTC 12128 / CDC 0568-73).